A 427-amino-acid polypeptide reads, in one-letter code: Glucose-6-phosphate isomerase (427 aa).

Catalysis depends on E277, which acts as the Proton donor. Residues H298 and K414 contribute to the active site.

This sequence belongs to the GPI family.

It is found in the cytoplasm. The enzyme catalyses alpha-D-glucose 6-phosphate = beta-D-fructose 6-phosphate. Its pathway is carbohydrate biosynthesis; gluconeogenesis. It participates in carbohydrate degradation; glycolysis; D-glyceraldehyde 3-phosphate and glycerone phosphate from D-glucose: step 2/4. Catalyzes the reversible isomerization of glucose-6-phosphate to fructose-6-phosphate. This is Glucose-6-phosphate isomerase from Mycoplasma capricolum subsp. capricolum (strain California kid / ATCC 27343 / NCTC 10154).